The sequence spans 61 residues: Aerolysin regulatory protein (61 aa).

A compositionally biased stretch (basic residues) spans 1–14; the sequence is MMIKRHLPQPRHRE. Positions 1–61 are disordered; it reads MMIKRHLPQP…GQTHTGPQIR (61 aa). The span at 51 to 61 shows a compositional bias: polar residues; the sequence is DGQTHTGPQIR.

Its function is as follows. Regulation of the expression of aerolysin. The polypeptide is Aerolysin regulatory protein (aerC) (Aeromonas sobria).